A 509-amino-acid chain; its full sequence is T-complex protein 11-like protein 1 (509 aa).

The span at 1 to 12 (MSENLDKSHVDE) shows a compositional bias: basic and acidic residues. The segment at 1–57 (MSENLDKSHVDEAGEAEAAASEQGLEGALECSDETLQKKVKSDSPSSQRVGRPHSSP) is disordered. Positions 16–30 (AEAAASEQGLEGALE) are enriched in low complexity. Serine 56 carries the post-translational modification Phosphoserine.

Belongs to the TCP11 family.

The protein is T-complex protein 11-like protein 1 (Tcp11l1) of Mus musculus (Mouse).